Here is a 479-residue protein sequence, read N- to C-terminus: Aspartyl/glutamyl-tRNA(Asn/Gln) amidotransferase subunit B (479 aa).

The protein belongs to the GatB/GatE family. GatB subfamily. In terms of assembly, heterotrimer of A, B and C subunits.

It carries out the reaction L-glutamyl-tRNA(Gln) + L-glutamine + ATP + H2O = L-glutaminyl-tRNA(Gln) + L-glutamate + ADP + phosphate + H(+). It catalyses the reaction L-aspartyl-tRNA(Asn) + L-glutamine + ATP + H2O = L-asparaginyl-tRNA(Asn) + L-glutamate + ADP + phosphate + 2 H(+). Its function is as follows. Allows the formation of correctly charged Asn-tRNA(Asn) or Gln-tRNA(Gln) through the transamidation of misacylated Asp-tRNA(Asn) or Glu-tRNA(Gln) in organisms which lack either or both of asparaginyl-tRNA or glutaminyl-tRNA synthetases. The reaction takes place in the presence of glutamine and ATP through an activated phospho-Asp-tRNA(Asn) or phospho-Glu-tRNA(Gln). The sequence is that of Aspartyl/glutamyl-tRNA(Asn/Gln) amidotransferase subunit B from Streptococcus pyogenes serotype M5 (strain Manfredo).